A 751-amino-acid polypeptide reads, in one-letter code: Photosystem I P700 chlorophyll a apoprotein A1 (751 aa).

The next 8 helical transmembrane spans lie at 73–96, 159–182, 198–222, 294–312, 349–372, 388–414, 436–458, and 533–551; these read VFSA…FHGA, LYIT…FHYH, LNHH…HVSL, VAHH…GHMY, WHAQ…QHMY, LSLF…IFMV, AIIS…LYIH, and FLVH…LILL. Cys-575 and Cys-584 together coordinate [4Fe-4S] cluster. 2 consecutive transmembrane segments (helical) span residues 591–612 and 665–687; these read HVFL…HFSW and LSAY…MFLF. His-676 is a chlorophyll a' binding site. Residues Met-684 and Tyr-692 each contribute to the chlorophyll a site. Trp-693 serves as a coordination point for phylloquinone. Residues 725–745 form a helical membrane-spanning segment; that stretch reads AVGVAHYLLGGIATTWSFFLA.

The protein belongs to the PsaA/PsaB family. As to quaternary structure, the PsaA/B heterodimer binds the P700 chlorophyll special pair and subsequent electron acceptors. PSI consists of a core antenna complex that captures photons, and an electron transfer chain that converts photonic excitation into a charge separation. The eukaryotic PSI reaction center is composed of at least 11 subunits. The cofactor is P700 is a chlorophyll a/chlorophyll a' dimer, A0 is one or more chlorophyll a, A1 is one or both phylloquinones and FX is a shared 4Fe-4S iron-sulfur center..

Its subcellular location is the plastid. It is found in the chloroplast thylakoid membrane. The enzyme catalyses reduced [plastocyanin] + hnu + oxidized [2Fe-2S]-[ferredoxin] = oxidized [plastocyanin] + reduced [2Fe-2S]-[ferredoxin]. Its function is as follows. PsaA and PsaB bind P700, the primary electron donor of photosystem I (PSI), as well as the electron acceptors A0, A1 and FX. PSI is a plastocyanin/cytochrome c6-ferredoxin oxidoreductase, converting photonic excitation into a charge separation, which transfers an electron from the donor P700 chlorophyll pair to the spectroscopically characterized acceptors A0, A1, FX, FA and FB in turn. Oxidized P700 is reduced on the lumenal side of the thylakoid membrane by plastocyanin or cytochrome c6. This is Photosystem I P700 chlorophyll a apoprotein A1 from Euglena gracilis.